A 288-amino-acid polypeptide reads, in one-letter code: Acetyl-coenzyme A carboxylase carboxyl transferase subunit beta (288 aa).

Residues 24-288 form the CoA carboxyltransferase N-terminal domain; it reads LWVKCPESGE…TRTPRASEAA (265 aa).

It belongs to the AccD/PCCB family. As to quaternary structure, acetyl-CoA carboxylase is a heterohexamer composed of biotin carboxyl carrier protein (AccB), biotin carboxylase (AccC) and two subunits each of ACCase subunit alpha (AccA) and ACCase subunit beta (AccD).

It localises to the cytoplasm. It catalyses the reaction N(6)-carboxybiotinyl-L-lysyl-[protein] + acetyl-CoA = N(6)-biotinyl-L-lysyl-[protein] + malonyl-CoA. The protein operates within lipid metabolism; malonyl-CoA biosynthesis; malonyl-CoA from acetyl-CoA: step 1/1. Functionally, component of the acetyl coenzyme A carboxylase (ACC) complex. Biotin carboxylase (BC) catalyzes the carboxylation of biotin on its carrier protein (BCCP) and then the CO(2) group is transferred by the transcarboxylase to acetyl-CoA to form malonyl-CoA. This chain is Acetyl-coenzyme A carboxylase carboxyl transferase subunit beta, found in Methylocella silvestris (strain DSM 15510 / CIP 108128 / LMG 27833 / NCIMB 13906 / BL2).